We begin with the raw amino-acid sequence, 398 residues long: Tryptophan synthase beta chain (398 aa).

Lys-87 carries the post-translational modification N6-(pyridoxal phosphate)lysine.

Belongs to the TrpB family. Tetramer of two alpha and two beta chains. It depends on pyridoxal 5'-phosphate as a cofactor.

It catalyses the reaction (1S,2R)-1-C-(indol-3-yl)glycerol 3-phosphate + L-serine = D-glyceraldehyde 3-phosphate + L-tryptophan + H2O. Its pathway is amino-acid biosynthesis; L-tryptophan biosynthesis; L-tryptophan from chorismate: step 5/5. Its function is as follows. The beta subunit is responsible for the synthesis of L-tryptophan from indole and L-serine. The sequence is that of Tryptophan synthase beta chain from Blochmanniella floridana.